A 67-amino-acid chain; its full sequence is Protein SlyX homolog (67 aa).

Residues 48-60 (TSAPSTAAESNPQ) are compositionally biased toward polar residues. The tract at residues 48 to 67 (TSAPSTAAESNPQHEIPPHY) is disordered.

Belongs to the SlyX family.

The protein is Protein SlyX homolog of Cupriavidus pinatubonensis (strain JMP 134 / LMG 1197) (Cupriavidus necator (strain JMP 134)).